Consider the following 673-residue polypeptide: DNA ligase (673 aa).

Residues 33-37 (DAEYD), 82-83 (SL), and Glu-115 contribute to the NAD(+) site. Residue Lys-117 is the N6-AMP-lysine intermediate of the active site. NAD(+)-binding residues include Arg-138, Glu-175, Lys-292, and Lys-316. Cys-410, Cys-413, Cys-428, and Cys-434 together coordinate Zn(2+). The 81-residue stretch at 593–673 (VGDNPFKEKT…TFLAWSKPYL (81 aa)) folds into the BRCT domain.

The protein belongs to the NAD-dependent DNA ligase family. LigA subfamily. Mg(2+) serves as cofactor. The cofactor is Mn(2+).

It carries out the reaction NAD(+) + (deoxyribonucleotide)n-3'-hydroxyl + 5'-phospho-(deoxyribonucleotide)m = (deoxyribonucleotide)n+m + AMP + beta-nicotinamide D-nucleotide.. DNA ligase that catalyzes the formation of phosphodiester linkages between 5'-phosphoryl and 3'-hydroxyl groups in double-stranded DNA using NAD as a coenzyme and as the energy source for the reaction. It is essential for DNA replication and repair of damaged DNA. The sequence is that of DNA ligase from Pasteurella multocida (strain Pm70).